The primary structure comprises 88 residues: MALVRSLLGAKKILSRSTASAAPKGFLAVYVGESQKKRYLVPLSYLSQPSFQALLSKSEEEFGFDHPMGGLTIPCPEDTFINVTSRLQ.

This sequence belongs to the ARG7 family.

It localises to the cell membrane. Functionally, functions as a positive effector of cell expansion through modulation of auxin transport. This chain is Auxin-responsive protein SAUR21, found in Arabidopsis thaliana (Mouse-ear cress).